The chain runs to 189 residues: UPF0398 protein LVIS_0849 (189 aa).

This sequence belongs to the UPF0398 family.

The chain is UPF0398 protein LVIS_0849 from Levilactobacillus brevis (strain ATCC 367 / BCRC 12310 / CIP 105137 / JCM 1170 / LMG 11437 / NCIMB 947 / NCTC 947) (Lactobacillus brevis).